Consider the following 211-residue polypeptide: Protein 33K (211 aa).

Disordered regions lie at residues 1–95 (MPPK…PCSL) and 107–140 (AGSPTAPAAPTKRLEKTPRVRKTSSAIATRQDSP). The span at 24 to 65 (DEEETWDDSQAEEVSDEEAEEQMESWDSLDEEDLEDVEEETI) shows a compositional bias: acidic residues. Residues 83-92 (KTIPPLPPQP) show a composition bias toward pro residues. The span at 129–140 (TSSAIATRQDSP) shows a compositional bias: polar residues. The necessary for nuclear subcellular location stretch occupies residues 154-181 (YAIFQQSRGQQLELKVKNRSLRSLTRSC). The tract at residues 160 to 180 (SRGQQLELKVKNRSLRSLTRS) is RS-repeat; required for splicing enhancer activity.

This sequence belongs to the adenoviridae splicing factor family. In terms of assembly, homooligomer. Interacts with DBP; this interaction occurs at a unique vertex during genome packaging. Interacts with IVa2; this interaction occurs at a unique vertex during genome packaging and seems to potentiate IVa2 and 33K oligomerization. In terms of processing, phosphorylated in vitro by human PKA and PRKDC. PRKDC inhibits, whereas PKA activates the splicing factor.

The protein localises to the host nucleus. Promotes alternative splicing of late transcripts by promoting splicing at weak 3' splice sites. Required for the temporal activation of major late pre-mRNA splicing at late times of infection. Induces the splicing and expression of the late capsid vertex protein. In terms of biological role, probably functions as the small terminase that is part of the molecular motor that translocates genomic DNA in empty capsid during DNA packaging. This motor is located at a unique vertex and comprises at least the IVa2 ATPase, the small terminase 33K and probably a portal. Forms a ring-like structure of about 17 nm in which genomic DNA is translocated into the capsid. Stimulates IVa2 ATPase activity in the presence of the viral genome. Once the DNA is packaged, the terminase detaches: the 33K protein is present in the empty particles, but not in the mature virions. Also involved in virion assembly. The sequence is that of Protein 33K from Human adenovirus F serotype 40 (HAdV-40).